Reading from the N-terminus, the 492-residue chain is B3 domain-containing protein REM3 (492 aa).

The TF-B3 1 DNA-binding region spans 12–104; sequence NRPFFVRSLA…VFHVTPSGRS (93 aa). The span at 105 to 116 shows a compositional bias: low complexity; that stretch reads FSQIRTSSSSGD. Residues 105-134 are disordered; the sequence is FSQIRTSSSSGDYDSDDDDDEAGDDDSDSK. Acidic residues predominate over residues 117–131; the sequence is YDSDDDDDEAGDDDS. 2 DNA-binding regions (TF-B3) span residues 154-250 and 286-382; these read YCLL…LCFK and FLTV…FCSE. Residues 385–395 are compositionally biased toward basic and acidic residues; the sequence is IEQEEAPEERG. Residues 385–427 are disordered; the sequence is IEQEEAPEERGTPLPKRARVSAEVGHSRRTQAPNKSSDDPKIL.

It localises to the nucleus. In Arabidopsis thaliana (Mouse-ear cress), this protein is B3 domain-containing protein REM3 (REM3).